The chain runs to 337 residues: Casein kinase I isoform alpha (337 aa).

A2 bears the N-acetylalanine mark. The residue at position 4 (S4) is a Phosphoserine. K8 is subject to N6-acetyllysine. The Protein kinase domain maps to 17-285 (YKLVRKIGSG…YLRQLFRILF (269 aa)). ATP is bound by residues 23-31 (IGSGSFGDI) and K46. The Proton acceptor role is filled by D136. Positions 309-325 (AASSSGQGQQAQTPTGK) are enriched in low complexity. Residues 309–337 (AASSSGQGQQAQTPTGKQTDKTKSNMKGF) are disordered.

The protein belongs to the protein kinase superfamily. CK1 Ser/Thr protein kinase family. Casein kinase I subfamily. Interacts with the Axin complex. Interacts with TUT1, leading to TUT1 phosphorylation. Interacts with FAM83A, FAM83B, FAM83C, FAM83D, FAM83E, FAM83F, FAM83G and FAM83H (via DUF1669). Interaction with FAM83H recruits CSNK1A1 to keratin filaments. Phosphorylated by MTOR in response to mitogenic stimulation, leading to its activation.

It is found in the cytoplasm. The protein resides in the cytoskeleton. Its subcellular location is the microtubule organizing center. The protein localises to the centrosome. It localises to the chromosome. It is found in the centromere. The protein resides in the kinetochore. Its subcellular location is the nucleus speckle. The protein localises to the cilium basal body. It localises to the spindle. It catalyses the reaction L-seryl-[protein] + ATP = O-phospho-L-seryl-[protein] + ADP + H(+). The catalysed reaction is L-threonyl-[protein] + ATP = O-phospho-L-threonyl-[protein] + ADP + H(+). Functionally, casein kinases are operationally defined by their preferential utilization of acidic proteins such as caseins as substrates. Can phosphorylate a large number of proteins. Participates in Wnt signaling. Phosphorylates CTNNB1 at 'Ser-45'. May phosphorylate PER1 and PER2. May play a role in segregating chromosomes during mitosis. May play a role in keratin cytoskeleton disassembly and thereby, it may regulate epithelial cell migration. Acts as a positive regulator of mTORC1 and mTORC2 signaling in response to nutrients by mediating phosphorylation of DEPTOR inhibitor. Acts as an inhibitor of NLRP3 inflammasome assembly by mediating phosphorylation of NLRP3. The protein is Casein kinase I isoform alpha (Csnk1a1) of Mus musculus (Mouse).